A 321-amino-acid chain; its full sequence is MSGDNSSSLTPGFFILNGVPGLEATHIWISLPFCFMYIIAVVGNCGLICLISHEEALHRPMYYFLALLSFTDVTLCTTMVPNMLCIFWFNLKEIDFNACLAQMFFVHMLTGMESGVLMLMALDRYVAICYPLRYATILTNPVIAKAGLATFLRNVMLIIPFTLLTKRLPYCRGNFIPHTYCDHMSVAKVSCGNFKVNAIYGLMVALLIGVFDICCISVSYTMILQAVMSLSSADARHKAFSTCTSHMCSIVITYVAAFFTFFTHRFVGHNIPNHIHIIVANLYLLLPPTMNPIVYGVKTKQIQEGVIKFLLGDKVSFTYDK.

Over 1-27 the chain is Extracellular; sequence MSGDNSSSLTPGFFILNGVPGLEATHI. N-linked (GlcNAc...) asparagine glycosylation occurs at N5. The chain crosses the membrane as a helical span at residues 28-48; that stretch reads WISLPFCFMYIIAVVGNCGLI. At 49–56 the chain is on the cytoplasmic side; that stretch reads CLISHEEA. Residues 57–77 traverse the membrane as a helical segment; the sequence is LHRPMYYFLALLSFTDVTLCT. Over 78-101 the chain is Extracellular; that stretch reads TMVPNMLCIFWFNLKEIDFNACLA. C99 and C191 are oxidised to a cystine. Residues 102 to 122 form a helical membrane-spanning segment; it reads QMFFVHMLTGMESGVLMLMAL. Over 123-141 the chain is Cytoplasmic; the sequence is DRYVAICYPLRYATILTNP. A helical membrane pass occupies residues 142 to 162; sequence VIAKAGLATFLRNVMLIIPFT. The Extracellular portion of the chain corresponds to 163-198; the sequence is LLTKRLPYCRGNFIPHTYCDHMSVAKVSCGNFKVNA. The chain crosses the membrane as a helical span at residues 199–219; sequence IYGLMVALLIGVFDICCISVS. Topologically, residues 220–239 are cytoplasmic; sequence YTMILQAVMSLSSADARHKA. The helical transmembrane segment at 240–260 threads the bilayer; it reads FSTCTSHMCSIVITYVAAFFT. At 261-276 the chain is on the extracellular side; the sequence is FFTHRFVGHNIPNHIH. The helical transmembrane segment at 277–297 threads the bilayer; the sequence is IIVANLYLLLPPTMNPIVYGV. Residues 298-321 lie on the Cytoplasmic side of the membrane; it reads KTKQIQEGVIKFLLGDKVSFTYDK.

This sequence belongs to the G-protein coupled receptor 1 family.

The protein resides in the cell membrane. Odorant receptor. This chain is Olfactory receptor 52N2 (OR52N2), found in Homo sapiens (Human).